The chain runs to 150 residues: Putative biopolymer transport protein ExbB-like 2 (150 aa).

3 helical membrane passes run 5–25 (VDYGIIGFLIFLSVIVIAIAI), 63–83 (APYIGLLGTVMGIMLTFMDLG), and 97–117 (LALALKATGMGLLVAIPAIVI).

The protein belongs to the ExbB/TolQ family.

It localises to the cell inner membrane. This is Putative biopolymer transport protein ExbB-like 2 from Helicobacter pylori (strain ATCC 700392 / 26695) (Campylobacter pylori).